Consider the following 71-residue polypeptide: DNA-directed RNA polymerase subunit omega (71 aa).

The protein belongs to the RNA polymerase subunit omega family. The RNAP catalytic core consists of 2 alpha, 1 beta, 1 beta' and 1 omega subunit. When a sigma factor is associated with the core the holoenzyme is formed, which can initiate transcription.

The catalysed reaction is RNA(n) + a ribonucleoside 5'-triphosphate = RNA(n+1) + diphosphate. Promotes RNA polymerase assembly. Latches the N- and C-terminal regions of the beta' subunit thereby facilitating its interaction with the beta and alpha subunits. This chain is DNA-directed RNA polymerase subunit omega, found in Campylobacter curvus (strain 525.92).